Here is a 209-residue protein sequence, read N- to C-terminus: ATP-dependent Clp protease proteolytic subunit (209 aa).

The Nucleophile role is filled by S107. Residue H132 is part of the active site.

The protein belongs to the peptidase S14 family. In terms of assembly, fourteen ClpP subunits assemble into 2 heptameric rings which stack back to back to give a disk-like structure with a central cavity, resembling the structure of eukaryotic proteasomes.

The protein localises to the cytoplasm. It catalyses the reaction Hydrolysis of proteins to small peptides in the presence of ATP and magnesium. alpha-casein is the usual test substrate. In the absence of ATP, only oligopeptides shorter than five residues are hydrolyzed (such as succinyl-Leu-Tyr-|-NHMec, and Leu-Tyr-Leu-|-Tyr-Trp, in which cleavage of the -Tyr-|-Leu- and -Tyr-|-Trp bonds also occurs).. Functionally, cleaves peptides in various proteins in a process that requires ATP hydrolysis. Has a chymotrypsin-like activity. Plays a major role in the degradation of misfolded proteins. This chain is ATP-dependent Clp protease proteolytic subunit, found in Methylobacterium nodulans (strain LMG 21967 / CNCM I-2342 / ORS 2060).